A 357-amino-acid chain; its full sequence is Outer membrane porin protein OmpD (357 aa).

Positions 1 to 21 are cleaved as a signal peptide; it reads MKLKLVAVAVTTLLAAGAVNA.

The protein belongs to the Gram-negative porin family. In terms of assembly, homotrimer.

It is found in the cell outer membrane. Forms pores that allow passive diffusion of small molecules across the outer membrane. The polypeptide is Outer membrane porin protein OmpD (ompD) (Citrobacter koseri (strain ATCC BAA-895 / CDC 4225-83 / SGSC4696)).